Reading from the N-terminus, the 591-residue chain is MKTISIFFVIILMSSSHAEDDVLCLKGFKSSLKDPSNQLNTWSFPNSSSSICKLTGVSCWNAKENRILSLQLQSMQLSGQIPESLKLCRSLQSLDLSFNDFSGLIPSQICSWLPYLVTLDLSGNKLSGSIPSQIVDCKFLNSLALNQNKLTGSIPSELTRLNRLQRLSLADNDLSGSIPSELSHYGEDGFRGNGGLCGKPLSNCGSFNGKNLTIIVTAGVIGAVGSLCVGFGMFWWFFIRDRRKMNNYGYGAGKCKDDSDWIGLLRSHKLVQVTLFQKPIVKIKLVDLIEATNGFDSGNIVVSSRSGVSYKADLPDGSTLEVKRLSSCCELSEKQFRSEINKLGQIRHPNLVPLLGFCVVEDEILLVYKHMANGTLYSQLQQWDIDWPTRVRVAVGAARGLAWLHHGCQPLYMHQYISSNVILLDEDFDARVIDYGLGKLVSSQDSKDSSFSNGKFGYVAPEYSSTMVASLSGDVYGFGIVLLEIVTGQKPVLINNGEEGFKESLVEWVSKHLSNGRSKDAIDRRIFGKGYDDEIMQVLRIACSCVVSRPKERPLMIQVYESLKNLGDQHGFFSEYSDEFPLIFNKQEHLK.

The first 18 residues, 1 to 18 (MKTISIFFVIILMSSSHA), serve as a signal peptide directing secretion. Residues 19-218 (EDDVLCLKGF…GKNLTIIVTA (200 aa)) lie on the Extracellular side of the membrane. Asparagine 46 carries an N-linked (GlcNAc...) asparagine glycan. LRR repeat units follow at residues 66-88 (RILS…LKLC), 90-111 (SLQS…QICS), 115-137 (YLVT…IVDC), 139-162 (FLNS…TRLN), and 163-185 (RLQR…LSHY). N-linked (GlcNAc...) asparagine glycosylation occurs at asparagine 211. Residues 219–239 (GVIGAVGSLCVGFGMFWWFFI) traverse the membrane as a helical segment. The Cytoplasmic segment spans residues 240-591 (RDRRKMNNYG…LIFNKQEHLK (352 aa)). Threonine 292 is modified (phosphothreonine). The Protein kinase domain maps to 295 to 573 (FDSGNIVVSS…KNLGDQHGFF (279 aa)). Residues 301-309 (VVSSRSGVS) and lysine 323 contribute to the ATP site. The residue at position 378 (serine 378) is a Phosphoserine. Position 389 is a phosphothreonine (threonine 389). At tyrosine 463 the chain carries Phosphotyrosine. Serine 465 is modified (phosphoserine). Residue threonine 466 is modified to Phosphothreonine. Serine 470 is subject to Phosphoserine.

The protein belongs to the protein kinase superfamily. Ser/Thr protein kinase family.

It localises to the membrane. It catalyses the reaction L-seryl-[protein] + ATP = O-phospho-L-seryl-[protein] + ADP + H(+). The enzyme catalyses L-threonyl-[protein] + ATP = O-phospho-L-threonyl-[protein] + ADP + H(+). This chain is Probable LRR receptor-like serine/threonine-protein kinase At1g69990, found in Arabidopsis thaliana (Mouse-ear cress).